Here is a 577-residue protein sequence, read N- to C-terminus: Pentatricopeptide repeat-containing protein At2g01390 (577 aa).

PPR repeat units lie at residues Asp-121–Ile-155, Asp-156–Pro-190, Thr-191–Pro-225, Asn-226–Pro-260, Asp-261–Leu-295, Asp-382–Leu-416, Lys-417–Leu-451, Gly-452–Asp-482, Gly-485–Pro-519, and Ser-520–Ser-554.

Belongs to the PPR family. P subfamily.

The sequence is that of Pentatricopeptide repeat-containing protein At2g01390 from Arabidopsis thaliana (Mouse-ear cress).